Consider the following 344-residue polypeptide: L-rhamnose-proton symporter (344 aa).

A run of 10 helical transmembrane segments spans residues 4 to 24, 38 to 58, 68 to 88, 101 to 121, 137 to 157, 175 to 195, 214 to 234, 259 to 279, 290 to 310, and 323 to 343; these read AITMGIFWHLIGAASAACFYA, WSVGGIVSWIILPWAISALLL, FSLSTLLPVFLFGAMWGIGNI, MGIGIAIGITLIVGTLMTPII, TLLGVLVALIGVGIVTRAGQL, LVLAVMCGIFSAGMSFAMNAA, LPSYVVIMGGGAIINLGFCFI, VLLSALGGLMWYLQFFFYAWG, ISWMLHMSFYVLCGGIVGLVL, and VLSLGCVVIIVAANIVGMGMA.

Belongs to the L-rhamnose transporter (TC 2.A.7.6) family.

The protein localises to the cell inner membrane. It catalyses the reaction L-rhamnopyranose(in) + H(+)(in) = L-rhamnopyranose(out) + H(+)(out). Its function is as follows. Uptake of L-rhamnose across the cytoplasmic membrane with the concomitant transport of protons into the cell (symport system). The protein is L-rhamnose-proton symporter of Escherichia coli O157:H7.